Reading from the N-terminus, the 117-residue chain is Dolichyl-diphosphooligosaccharide--protein glycosyltransferase subunit DAD1 (117 aa).

Residues M1–D33 lie on the Cytoplasmic side of the membrane. The helical transmembrane segment at L34–G54 threads the bilayer. At P55 to P57 the chain is on the lumenal side. A helical transmembrane segment spans residues F58–L78. Residues R79–R96 are Cytoplasmic-facing. A helical transmembrane segment spans residues A97–G117.

It belongs to the DAD/OST2 family. Component of the oligosaccharyltransferase (OST) complex.

It localises to the endoplasmic reticulum membrane. It participates in protein modification; protein glycosylation. Subunit of the oligosaccharyl transferase (OST) complex that catalyzes the initial transfer of a defined glycan (Glc(3)Man(9)GlcNAc(2) in eukaryotes) from the lipid carrier dolichol-pyrophosphate to an asparagine residue within an Asn-X-Ser/Thr consensus motif in nascent polypeptide chains, the first step in protein N-glycosylation. N-glycosylation occurs cotranslationally and the complex associates with the Sec61 complex at the channel-forming translocon complex that mediates protein translocation across the endoplasmic reticulum (ER). All subunits are required for a maximal enzyme activity. The polypeptide is Dolichyl-diphosphooligosaccharide--protein glycosyltransferase subunit DAD1 (DAD1) (Pisum sativum (Garden pea)).